We begin with the raw amino-acid sequence, 490 residues long: Betaine aldehyde dehydrogenase (490 aa).

The K(+) site is built by Thr-26, Ile-27, and Asp-93. 150–152 (GAW) serves as a coordination point for NAD(+). Lys-162 functions as the Charge relay system in the catalytic mechanism. 176–179 (KPSE) provides a ligand contact to NAD(+). Val-180 is a K(+) binding site. Position 230–233 (230–233 (GVAS)) interacts with NAD(+). Leu-246 contacts K(+). Glu-252 serves as the catalytic Proton acceptor. Gly-254, Cys-286, and Glu-387 together coordinate NAD(+). Cys-286 acts as the Nucleophile in catalysis. Cys-286 carries the cysteine sulfenic acid (-SOH) modification. Lys-457 and Gly-460 together coordinate K(+). The active-site Charge relay system is the Glu-464.

Belongs to the aldehyde dehydrogenase family. Dimer of dimers. The cofactor is K(+).

It carries out the reaction betaine aldehyde + NAD(+) + H2O = glycine betaine + NADH + 2 H(+). The protein operates within amine and polyamine biosynthesis; betaine biosynthesis via choline pathway; betaine from betaine aldehyde: step 1/1. Functionally, involved in the biosynthesis of the osmoprotectant glycine betaine. Catalyzes the irreversible oxidation of betaine aldehyde to the corresponding acid. This Escherichia coli O7:K1 (strain IAI39 / ExPEC) protein is Betaine aldehyde dehydrogenase.